A 417-amino-acid polypeptide reads, in one-letter code: Tyrosine--tRNA ligase (417 aa).

Tyr34 contributes to the L-tyrosine binding site. The 'HIGH' region signature appears at 39 to 48 (PSGDSLHIGH). 2 residues coordinate L-tyrosine: Tyr165 and Gln169. A 'KMSKS' region motif is present at residues 227–231 (KFGKT). Lys230 is a binding site for ATP. Positions 349 to 415 (ANIVDWLVDT…GKKNYTLAKV (67 aa)) constitute an S4 RNA-binding domain.

The protein belongs to the class-I aminoacyl-tRNA synthetase family. TyrS type 1 subfamily. Homodimer.

Its subcellular location is the cytoplasm. The catalysed reaction is tRNA(Tyr) + L-tyrosine + ATP = L-tyrosyl-tRNA(Tyr) + AMP + diphosphate + H(+). Catalyzes the attachment of tyrosine to tRNA(Tyr) in a two-step reaction: tyrosine is first activated by ATP to form Tyr-AMP and then transferred to the acceptor end of tRNA(Tyr). The polypeptide is Tyrosine--tRNA ligase (Limosilactobacillus fermentum (strain NBRC 3956 / LMG 18251) (Lactobacillus fermentum)).